Reading from the N-terminus, the 570-residue chain is Molecular chaperone MKKS (570 aa).

Position 192-199 (192-199 (GHIILGKS)) interacts with ATP. Residues 198 to 370 (KSLIVPLKGQ…FHLIPNEATI (173 aa)) form a substrate-binding apical domain region.

The protein belongs to the TCP-1 chaperonin family. In terms of assembly, component of a complex composed at least of MKKS, BBS10, BBS12, TCP1, CCT2, CCT3, CCT4, CCT5 and CCT8. Interacts with STUB1. Interacts with BBS2 (via coiled coil domain). Interacts with CCDC28B. Interacts with BBS12. Interacts with SMARCC1, a component of the SWI/SNF complexes; the interaction takes place predominantly in the cytoplasm and may modulate SMARCC1 location. Interacts with DLEC1.

The protein resides in the cytoplasm. The protein localises to the cytoskeleton. It is found in the microtubule organizing center. It localises to the centrosome. Its subcellular location is the cytosol. The protein resides in the nucleus. Functionally, probable molecular chaperone that assists the folding of proteins upon ATP hydrolysis. Plays a role in the assembly of BBSome, a complex involved in ciliogenesis regulating transports vesicles to the cilia. May play a role in protein processing in limb, cardiac and reproductive system development. May play a role in cytokinesis. This chain is Molecular chaperone MKKS (MKKS), found in Pongo abelii (Sumatran orangutan).